The chain runs to 558 residues: Glutamine--tRNA ligase (558 aa).

The short motif at 34–44 is the 'HIGH' region element; the sequence is PEPNGYLHIGH. Residues 35-37 and 41-47 each bind ATP; these read EPN and HIGHAKS. Positions 67 and 212 each coordinate L-glutamine. Residues threonine 231, 261–262, and 269–271 each bind ATP; these read RL and LSK. Positions 268 to 272 match the 'KMSKS' region motif; the sequence is VLSKR.

It belongs to the class-I aminoacyl-tRNA synthetase family. As to quaternary structure, monomer.

The protein localises to the cytoplasm. The enzyme catalyses tRNA(Gln) + L-glutamine + ATP = L-glutaminyl-tRNA(Gln) + AMP + diphosphate. In Pseudoalteromonas atlantica (strain T6c / ATCC BAA-1087), this protein is Glutamine--tRNA ligase.